Reading from the N-terminus, the 160-residue chain is uncharacterized protein (160 aa).

Its subcellular location is the plastid. This is an uncharacterized protein from Euglena longa (Euglenophycean alga).